The primary structure comprises 111 residues: UPF0145 protein Bphy_3680 (111 aa).

This sequence belongs to the UPF0145 family.

The chain is UPF0145 protein Bphy_3680 from Paraburkholderia phymatum (strain DSM 17167 / CIP 108236 / LMG 21445 / STM815) (Burkholderia phymatum).